The chain runs to 782 residues: Cysteine-rich protein 2-binding protein (782 aa).

Position 4 is a phosphoserine (Ser4). A disordered region spans residues Arg13–Glu33. The residue at position 231 (Lys231) is an N6-acetyllysine. Positions Pro251–Leu282 are disordered. Over residues Met256–Lys276 the composition is skewed to basic and acidic residues. At Ser285 the chain carries Phosphoserine. Position 292 is an N6-acetyllysine (Lys292). Positions Leu315 to Ser335 are enriched in low complexity. Disordered stretches follow at residues Leu315–Thr346 and Val400–Tyr460. Basic and acidic residues-rich tracts occupy residues Arg405 to Ile426 and Lys446 to Arg459. Residue Ser416 is modified to Phosphoserine. The N-acetyltransferase domain maps to Leu638–Arg782.

As to quaternary structure, interacts with the LIM 1 domain of CSRP2. Component of the ADA2A-containing complex (ATAC), composed of CSRP2BP, KAT2A, TADA2L, TADA3L, ZZ3, MBIP, WDR5, YEATS2, CCDC101 and DR1. In the complex, it probably interacts directly with KAT2A, MBIP and WDR5. Expressed in skeletal muscle, heart, lung, placenta, brain, liver, pancreas and kidney. High expression in skeletal muscle and heart. Lower expression in lung.

Its subcellular location is the nucleus. It is found in the cytoplasm. Component of the ATAC complex, a complex with histone acetyltransferase activity on histones H3 and H4. May function as a scaffold for the ATAC complex to promote ATAC complex stability. Has also weak histone acetyltransferase activity toward histone H4. Required for the normal progression through G1 and G2/M phases of the cell cycle. The protein is Cysteine-rich protein 2-binding protein of Homo sapiens (Human).